An 832-amino-acid chain; its full sequence is Translation initiation factor IF-2 (832 aa).

Residues 1 to 10 show a composition bias toward basic and acidic residues; the sequence is MLMSDVEKFG. Disordered regions lie at residues 1-87, 120-148, and 163-201; these read MLMS…SRSA, RDEE…PAAA, and IAPG…GGGG. Residues 11–20 show a composition bias toward gly residues; sequence GDCGSSGGSG. Composition is skewed to polar residues over residues 29-42 and 71-87; these read RAST…STGG and SPYT…SRSA. The tr-type G domain maps to 331–500; sequence PRPPVVTVMG…LLLAEMLELR (170 aa). A G1 region spans residues 340-347; it reads GHVDHGKT. Residue 340–347 coordinates GTP; that stretch reads GHVDHGKT. Positions 365 to 369 are G2; the sequence is GITQH. Positions 386–389 are G3; sequence DTPG. Residues 386–390 and 440–443 each bind GTP; these read DTPGH and NKID. The segment at 440 to 443 is G4; sequence NKID. A G5 region spans residues 476-478; it reads SAK.

Belongs to the TRAFAC class translation factor GTPase superfamily. Classic translation factor GTPase family. IF-2 subfamily.

The protein localises to the cytoplasm. Its function is as follows. One of the essential components for the initiation of protein synthesis. Protects formylmethionyl-tRNA from spontaneous hydrolysis and promotes its binding to the 30S ribosomal subunits. Also involved in the hydrolysis of GTP during the formation of the 70S ribosomal complex. This Anaplasma marginale (strain St. Maries) protein is Translation initiation factor IF-2.